The chain runs to 245 residues: CMRF35-like molecule 3 (245 aa).

The signal sequence occupies residues 1-18; the sequence is MWQFPALLFLFLPGCCTA. The Ig-like V-type domain occupies 19-124; that stretch reads QDPVTGPEEV…TDPMFKVNVN (106 aa). Over 19–189 the chain is Extracellular; it reads QDPVTGPEEV…FIWSLLSSIS (171 aa). Cys40 and Cys108 are joined by a disulfide. 2 important for maintaining surface expression and for interaction with FCER1G regions span residues 177–182 and 189–198; these read NSLFIW and SFLLMVFVVV. Residues 190–210 traverse the membrane as a helical segment; that stretch reads FLLMVFVVVPLLLSMLSAVLW. The Cytoplasmic portion of the chain corresponds to 211–245; that stretch reads VNRPQRHYGGGEIGLVETHRSDALDGEKHFPGDEK.

Belongs to the CD300 family. Interacts with FCER1G; the interaction may be indirect. Interacts with TLR9. In terms of tissue distribution, highly expressed in bone marrow-derived mast cells and macrophages, peripheral blood monocytes and CD11c+ cells, with weaker expression detected in CD11b cells in bone marrow and peripheral blood. Not detected in B220+ cells in bone marrow or spleen, in Thy-1.2+ or CD3+ cells in peripheral blood, spleen or thymus, or in NK1.1+ cells in spleen (at protein level). Widely expressed in various tissues including heart, liver, spleen, lung, kidney, brain, bone marrow, thymus, axillary lymph node and mesenteric lymph node. Highly expressed in macrophage cell lines J774.1 and RAW 264.7 and in mast cell line MC/9. Weak expression detected in B-lineage cell lines WEHI-231 and A20 and in dendritic cell line DC2.4. Not detected in other myeloid cell lines or T-lineage cell lines.

Its subcellular location is the cell membrane. It localises to the early endosome. The protein localises to the lysosome. Its function is as follows. Acts as an activating receptor inducing cytokine production in mast cells. Can act as a positive regulator of TLR9 signaling in macrophages, leading to enhanced production of pro-inflammatory cytokines. The sequence is that of CMRF35-like molecule 3 from Mus musculus (Mouse).